The sequence spans 472 residues: E3 ubiquitin-protein ligase MYLIP-A (472 aa).

Residues 1–279 (MLCHVTRPDA…ETHAFYRCDT (279 aa)) enclose the FERM domain. The segment at 384-419 (CMLCCEEEIDAAFCPCGHMVCCQNCAAQLQSCPVCR) adopts an RING-type zinc-finger fold.

In terms of assembly, interacts with anxa5. As to expression, ubiquitous.

It is found in the cytoplasm. Its subcellular location is the cytosol. It carries out the reaction S-ubiquitinyl-[E2 ubiquitin-conjugating enzyme]-L-cysteine + [acceptor protein]-L-lysine = [E2 ubiquitin-conjugating enzyme]-L-cysteine + N(6)-ubiquitinyl-[acceptor protein]-L-lysine.. It participates in protein modification; protein ubiquitination. Functionally, E3 ubiquitin-protein ligase that mediates ubiquitination and subsequent proteasomal degradation of myosin regulatory light chain (MRLC). Regulates cell movements during gastrulation by acting downstream of fz7 to antagonize the frizzled-signaling pathway. The sequence is that of E3 ubiquitin-protein ligase MYLIP-A (mylipa) from Danio rerio (Zebrafish).